Here is a 466-residue protein sequence, read N- to C-terminus: Ras GTPase-activating protein-binding protein 1 (466 aa).

The NTF2 domain occupies 11–133; the sequence is VGREFVRQYY…FYVHNDIFRY (123 aa). Glycyl lysine isopeptide (Lys-Gly) (interchain with G-Cter in ubiquitin) cross-links involve residues Lys-36, Lys-50, Lys-59, Lys-64, Lys-76, and Lys-123. Residues 142-225 are acidic disordered region; that stretch reads VTEPQEESEE…EPVLEETVPE (84 aa). Thr-143 bears the Phosphothreonine mark. Disordered stretches follow at residues 144–172 and 184–243; these read EPQE…DSGT and EEHL…QTVQ. Acidic residues-rich tracts occupy residues 145–157 and 185–206; these read PQEE…EEPE and EHLE…EQEP. Ser-149 bears the Phosphoserine mark. Phosphoserine is present on residues Ser-231, Ser-232, Ser-250, and Ser-253. The interval 255 to 329 is disordered; it reads TSKNLPPSGA…REAGEQGDIE (75 aa). Composition is skewed to basic and acidic residues over residues 297–307 and 318–329; these read PQRDQRVREQR and PIREAGEQGDIE. The 76-residue stretch at 340–415 folds into the RRM domain; sequence HQLFIGNLPH…VRLNVEEKKT (76 aa). Residues Lys-353 and Lys-357 each participate in a glycyl lysine isopeptide (Lys-Gly) (interchain with G-Cter in ubiquitin) cross-link. Ser-373 bears the Phosphoserine mark. Lys-376 is covalently cross-linked (Glycyl lysine isopeptide (Lys-Gly) (interchain with G-Cter in ubiquitin)). Lys-376 carries the N6-acetyllysine; alternate modification. Residue Lys-376 forms a Glycyl lysine isopeptide (Lys-Gly) (interchain with G-Cter in SUMO2); alternate linkage. Residue Lys-393 forms a Glycyl lysine isopeptide (Lys-Gly) (interchain with G-Cter in ubiquitin); alternate linkage. Residues 410–466 are RG-rich region; sequence VEEKKTRAAREGDRRDNRLRGPGGPRGGLGGGMRGPPRGGMVQKPGFGVGRGLAPRQ. The segment covering 413–428 has biased composition (basic and acidic residues); the sequence is KKTRAAREGDRRDNRL. A disordered region spans residues 413–466; the sequence is KKTRAAREGDRRDNRLRGPGGPRGGLGGGMRGPPRGGMVQKPGFGVGRGLAPRQ. An Asymmetric dimethylarginine modification is found at Arg-429. The span at 430-447 shows a compositional bias: gly residues; the sequence is GPGGPRGGLGGGMRGPPR. Position 435 is an asymmetric dimethylarginine; alternate (Arg-435). An omega-N-methylarginine; alternate mark is found at Arg-435, Arg-447, Arg-460, and Arg-465. Dimethylated arginine; alternate is present on Arg-460.

As to quaternary structure, homodimer and oligomer. Component of a TAU mRNP complex, at least composed of IGF2BP1, ELAVL4 and G3BP1. Binds to the SH3 domain of Ras GTPase-activating protein (RASA1) in proliferating cells. No interaction in quiescent cells. Interacts (via NTF2 domain) with USP10; inhibiting stress granule formation by lowering G3BP1 valence. Interacts (via NTF2 domain) with CAPRIN1; promoting stress granule formation by lowering the saturation-concentration of G3BP1. Interacts (via NTF2 domain) with UBAP2L; promoting stress granule formation. Associates (via RG-rich region) with 40S ribosome subunits. Interacts with RPTOR and SPAG5; this complex is increased by oxidative stress. Interacts with ATXN2L. Interacts with STYXL1. Interacts with CGAS (via N-terminus); this interaction promotes the DNA-binding and activation of CGAS. Interacts (via C-terminus) with RIGI. Interacts with PABPC1. Interacts with QKI (isoforms QKI6 and QKI7); directing N(7)-methylguanine-containing mRNAs to stress granules. Requires Mg(2+) as cofactor. Phosphorylation of the acidic disordered region regulates stress granule assembly. RASA1-dependent phosphorylation of Ser-149 induces a conformational change that prevents self-association. Dephosphorylation after HRAS activation is required for stress granule assembly. Ser-149 phosphorylation induces partial nuclear localization. In terms of processing, arg-435 is dimethylated, probably to asymmetric dimethylarginine. Post-translationally, ubiquitinated by TRIM21 via 'Lys-63'-linked polyubiquitination in the NTF2 domain in response to heat shock, leading to stress granule disassembly: ubiquitination promotes interaction with the FAF2 adapter, followed by interaction with VCP, which extracts G3BP1 from stress granules, leading to stress granule disassembly. In case of prolonged stress, ubiquitination by TRIM21 leads to autophagy-dependent degradation of G3BP1 via recruitment of ubiquitinated G3BP1 by SQSTM1 and/or CALCOCO2 to autophagosomes.

Its subcellular location is the cytoplasm. The protein localises to the cytosol. The protein resides in the perikaryon. It localises to the stress granule. It is found in the nucleus. It carries out the reaction ATP + H2O = ADP + phosphate + H(+). With respect to regulation, under physiological conditions, G3BP1 adopts a compact state that is stabilized by intramolecular interactions between the RG-rich and the acidic regions that inhibit phase separation. Upon stress, polysomes disassemble and mRNAs are released in an unfolded protein-free state. Binding of unfolded mRNA to G3BP1 outcompetes the intramolecular interactions and RNA-bound G3BP1 adopts an expanded conformation in which the RG-rich region becomes exposed to engage in protein-protein and protein-RNA interactions, allowing physical cross-linking of RNA molecules to form protein-RNA condensates, leading to liquid-liquid phase separation (LLPS). Functionally, protein involved in various processes, such as stress granule formation and innate immunity. Plays an essential role in stress granule formation. Stress granules are membraneless compartments that store mRNAs and proteins, such as stalled translation pre-initiation complexes, in response to stress. Promotes formation of stress granules phase-separated membraneless compartment by undergoing liquid-liquid phase separation (LLPS) upon unfolded RNA-binding: functions as a molecular switch that triggers RNA-dependent LLPS in response to a rise in intracellular free RNA concentrations. Also acts as an ATP- and magnesium-dependent helicase: unwinds DNA/DNA, RNA/DNA, and RNA/RNA substrates with comparable efficiency. Acts unidirectionally by moving in the 5' to 3' direction along the bound single-stranded DNA. Unwinds preferentially partial DNA and RNA duplexes having a 17 bp annealed portion and either a hanging 3' tail or hanging tails at both 5'- and 3'-ends. Plays an essential role in innate immunity by promoting CGAS and RIGI activity. Participates in the DNA-triggered cGAS/STING pathway by promoting the DNA binding and activation of CGAS. Triggers the condensation of cGAS, a process probably linked to the formation of membrane-less organelles. Also enhances RIGI-induced type I interferon production probably by helping RIGI at sensing pathogenic RNA. May also act as a phosphorylation-dependent sequence-specific endoribonuclease in vitro: Cleaves exclusively between cytosine and adenine and cleaves MYC mRNA preferentially at the 3'-UTR. The sequence is that of Ras GTPase-activating protein-binding protein 1 (G3BP1) from Pongo abelii (Sumatran orangutan).